Here is a 434-residue protein sequence, read N- to C-terminus: Histidinol dehydrogenase (434 aa).

NAD(+) is bound by residues tyrosine 130, glutamine 188, and asparagine 211. Substrate is bound by residues serine 237, glutamine 259, and histidine 262. Zn(2+)-binding residues include glutamine 259 and histidine 262. Active-site proton acceptor residues include glutamate 326 and histidine 327. Substrate-binding residues include histidine 327, aspartate 360, glutamate 414, and histidine 419. Residue aspartate 360 participates in Zn(2+) binding. Zn(2+) is bound at residue histidine 419.

It belongs to the histidinol dehydrogenase family. In terms of assembly, homodimer. Requires Zn(2+) as cofactor.

The catalysed reaction is L-histidinol + 2 NAD(+) + H2O = L-histidine + 2 NADH + 3 H(+). It functions in the pathway amino-acid biosynthesis; L-histidine biosynthesis; L-histidine from 5-phospho-alpha-D-ribose 1-diphosphate: step 9/9. Functionally, catalyzes the sequential NAD-dependent oxidations of L-histidinol to L-histidinaldehyde and then to L-histidine. This chain is Histidinol dehydrogenase, found in Shigella dysenteriae serotype 1 (strain Sd197).